The chain runs to 599 residues: NADH-quinone oxidoreductase subunit C/D (599 aa).

Positions 1–189 (MTELMTQNSA…DPFVLTKQKE (189 aa)) are NADH dehydrogenase I subunit C. The segment at 213-599 (DFMFLNLGPN…IDFVMSDVDR (387 aa)) is NADH dehydrogenase I subunit D.

The protein in the N-terminal section; belongs to the complex I 30 kDa subunit family. In the C-terminal section; belongs to the complex I 49 kDa subunit family. In terms of assembly, NDH-1 is composed of 13 different subunits. Subunits NuoB, CD, E, F, and G constitute the peripheral sector of the complex.

It localises to the cell inner membrane. The catalysed reaction is a quinone + NADH + 5 H(+)(in) = a quinol + NAD(+) + 4 H(+)(out). NDH-1 shuttles electrons from NADH, via FMN and iron-sulfur (Fe-S) centers, to quinones in the respiratory chain. The immediate electron acceptor for the enzyme in this species is believed to be ubiquinone. Couples the redox reaction to proton translocation (for every two electrons transferred, four hydrogen ions are translocated across the cytoplasmic membrane), and thus conserves the redox energy in a proton gradient. The polypeptide is NADH-quinone oxidoreductase subunit C/D (Sodalis glossinidius (strain morsitans)).